The chain runs to 265 residues: Type III pantothenate kinase (265 aa).

Residue 6–13 (DVGNTHTV) coordinates ATP. A substrate-binding site is contributed by 112–115 (GADR). The Proton acceptor role is filled by aspartate 114. Residue aspartate 134 coordinates K(+). Threonine 137 contributes to the ATP binding site. Threonine 189 contacts substrate.

It belongs to the type III pantothenate kinase family. As to quaternary structure, homodimer. Requires NH4(+) as cofactor. It depends on K(+) as a cofactor.

The protein localises to the cytoplasm. It carries out the reaction (R)-pantothenate + ATP = (R)-4'-phosphopantothenate + ADP + H(+). It functions in the pathway cofactor biosynthesis; coenzyme A biosynthesis; CoA from (R)-pantothenate: step 1/5. Its function is as follows. Catalyzes the phosphorylation of pantothenate (Pan), the first step in CoA biosynthesis. This Streptomyces coelicolor (strain ATCC BAA-471 / A3(2) / M145) protein is Type III pantothenate kinase.